The primary structure comprises 129 residues: Protachykinin-1 (129 aa).

Residues 1-19 form the signal peptide; sequence MKILVALAVFFLVSTQLFA. The propeptide occupies 20-56; the sequence is EEIGANDDLNYWSDWYDSDQIKEELPEPFEHLLQRIA. Methionine amide is present on residues Met-68 and Met-107.

Belongs to the tachykinin family. The substance P form is cleaved at Pro-59 by the prolyl endopeptidase FAP (seprase) activity (in vitro). Substance P is also cleaved and degraded by Angiotensin-converting enzyme (ACE) and neprilysin (MME).

The protein resides in the secreted. Tachykinins are active peptides which excite neurons, evoke behavioral responses, are potent vasodilators and secretagogues, and contract (directly or indirectly) many smooth muscles. This is Protachykinin-1 (TAC1) from Homo sapiens (Human).